The primary structure comprises 279 residues: Probable endonuclease 4 (279 aa).

Zn(2+)-binding residues include histidine 68, histidine 108, glutamate 143, aspartate 177, histidine 180, histidine 214, aspartate 227, histidine 229, and glutamate 259.

The protein belongs to the AP endonuclease 2 family. The cofactor is Zn(2+).

The enzyme catalyses Endonucleolytic cleavage to 5'-phosphooligonucleotide end-products.. Endonuclease IV plays a role in DNA repair. It cleaves phosphodiester bonds at apurinic or apyrimidinic (AP) sites, generating a 3'-hydroxyl group and a 5'-terminal sugar phosphate. This Nitrosopumilus maritimus (strain SCM1) protein is Probable endonuclease 4.